Here is a 217-residue protein sequence, read N- to C-terminus: Non-structural protein NS3 (217 aa).

It belongs to the orbivirus NS3 family.

Its function is as follows. May play a role in the release of virions from infected cells. The chain is Non-structural protein NS3 (Segment-10) from Camelus dromedarius (Dromedary).